The chain runs to 475 residues: ATP synthase subunit beta (475 aa).

161–168 serves as a coordination point for ATP; it reads GGAGVGKT.

It belongs to the ATPase alpha/beta chains family. In terms of assembly, F-type ATPases have 2 components, CF(1) - the catalytic core - and CF(0) - the membrane proton channel. CF(1) has five subunits: alpha(3), beta(3), gamma(1), delta(1), epsilon(1). CF(0) has three main subunits: a(1), b(2) and c(9-12). The alpha and beta chains form an alternating ring which encloses part of the gamma chain. CF(1) is attached to CF(0) by a central stalk formed by the gamma and epsilon chains, while a peripheral stalk is formed by the delta and b chains.

The protein localises to the cell membrane. The enzyme catalyses ATP + H2O + 4 H(+)(in) = ADP + phosphate + 5 H(+)(out). Produces ATP from ADP in the presence of a proton gradient across the membrane. The catalytic sites are hosted primarily by the beta subunits. The protein is ATP synthase subunit beta of Mycoplasma mycoides subsp. mycoides SC (strain CCUG 32753 / NCTC 10114 / PG1).